A 294-amino-acid chain; its full sequence is Bifunctional protein FolD (294 aa).

NADP(+)-binding positions include 169–171 (GRG), Thr196, and Val237.

The protein belongs to the tetrahydrofolate dehydrogenase/cyclohydrolase family. Homodimer.

It catalyses the reaction (6R)-5,10-methylene-5,6,7,8-tetrahydrofolate + NADP(+) = (6R)-5,10-methenyltetrahydrofolate + NADPH. The catalysed reaction is (6R)-5,10-methenyltetrahydrofolate + H2O = (6R)-10-formyltetrahydrofolate + H(+). It participates in one-carbon metabolism; tetrahydrofolate interconversion. In terms of biological role, catalyzes the oxidation of 5,10-methylenetetrahydrofolate to 5,10-methenyltetrahydrofolate and then the hydrolysis of 5,10-methenyltetrahydrofolate to 10-formyltetrahydrofolate. The sequence is that of Bifunctional protein FolD from Renibacterium salmoninarum (strain ATCC 33209 / DSM 20767 / JCM 11484 / NBRC 15589 / NCIMB 2235).